A 120-amino-acid chain; its full sequence is Methylglyoxal synthase (120 aa).

Residues 1-120 (MRIALIAHDN…TAEILVESVL (120 aa)) enclose the MGS-like domain. Substrate-binding positions include H8, K12, and 54–55 (SG). Residue D60 is the Proton donor/acceptor of the active site. H87 is a binding site for substrate.

Belongs to the methylglyoxal synthase family.

The enzyme catalyses dihydroxyacetone phosphate = methylglyoxal + phosphate. In terms of biological role, catalyzes the formation of methylglyoxal from dihydroxyacetone phosphate. This is Methylglyoxal synthase from Natranaerobius thermophilus (strain ATCC BAA-1301 / DSM 18059 / JW/NM-WN-LF).